We begin with the raw amino-acid sequence, 125 residues long: Glycine cleavage system H protein (125 aa).

One can recognise a Lipoyl-binding domain in the interval 22 to 104 (SYIIGITDFA…YDTGWILKLT (83 aa)). K63 carries the post-translational modification N6-lipoyllysine.

The protein belongs to the GcvH family. In terms of assembly, the glycine cleavage system is composed of four proteins: P, T, L and H. (R)-lipoate is required as a cofactor.

Its function is as follows. The glycine cleavage system catalyzes the degradation of glycine. The H protein shuttles the methylamine group of glycine from the P protein to the T protein. Functionally, is also involved in protein lipoylation via its role as an octanoyl/lipoyl carrier protein intermediate. This Listeria welshimeri serovar 6b (strain ATCC 35897 / DSM 20650 / CCUG 15529 / CIP 8149 / NCTC 11857 / SLCC 5334 / V8) protein is Glycine cleavage system H protein.